The following is an 854-amino-acid chain: Leucine--tRNA ligase (854 aa).

Residues 1–32 (MARRDMAAETMDPRASTEPSPNEPREPARYDH) form a disordered region. Residues 23 to 32 (EPREPARYDH) are compositionally biased toward basic and acidic residues. The short motif at 69–80 (PYPSGSGLHVGH) is the 'HIGH' region element. Residues 633-637 (KMSKS) carry the 'KMSKS' region motif. An ATP-binding site is contributed by Lys636.

Belongs to the class-I aminoacyl-tRNA synthetase family.

Its subcellular location is the cytoplasm. The catalysed reaction is tRNA(Leu) + L-leucine + ATP = L-leucyl-tRNA(Leu) + AMP + diphosphate. This Sorangium cellulosum (strain So ce56) (Polyangium cellulosum (strain So ce56)) protein is Leucine--tRNA ligase.